Consider the following 119-residue polypeptide: Ribonuclease P protein component (119 aa).

The protein belongs to the RnpA family. Consists of a catalytic RNA component (M1 or rnpB) and a protein subunit.

It catalyses the reaction Endonucleolytic cleavage of RNA, removing 5'-extranucleotides from tRNA precursor.. Functionally, RNaseP catalyzes the removal of the 5'-leader sequence from pre-tRNA to produce the mature 5'-terminus. It can also cleave other RNA substrates such as 4.5S RNA. The protein component plays an auxiliary but essential role in vivo by binding to the 5'-leader sequence and broadening the substrate specificity of the ribozyme. This Streptococcus pyogenes serotype M5 (strain Manfredo) protein is Ribonuclease P protein component.